A 462-amino-acid polypeptide reads, in one-letter code: 3-ketoacyl-CoA thiolase 2, peroxisomal (462 aa).

The transit peptide at 1–34 (MEKAIERQRVLLEHLRPSSSSSHNYEASLSASAC) directs the protein to the peroxisome. Cys138 acts as the Acyl-thioester intermediate in catalysis. Cysteines 138 and 192 form a disulfide. Catalysis depends on proton acceptor residues His393 and Cys425.

This sequence belongs to the thiolase-like superfamily. Thiolase family. Forms homodimers. As to expression, accumulates in etiolated cotyledons and in seedlings, also present in roots, flowers and siliques (at protein level). High levels in wounded leaves.

It is found in the peroxisome. It localises to the glyoxysome. The catalysed reaction is an acyl-CoA + acetyl-CoA = a 3-oxoacyl-CoA + CoA. It functions in the pathway lipid metabolism; fatty acid metabolism. In terms of biological role, involved in long chain fatty-acid beta-oxidation prior to gluconeogenesis during germination and subsequent seedling growth. Confers sensitivity to 2,4-dichlorophenoxybutiric acid (2,4-DB). Required for local and systemic induction of jasmonic acid (JA) biosynthesis after wounding. Seems to be involved in JA biosynthesis during senescence. May be involved in the positive regulation of abscisic acid-activated signaling pathway. This chain is 3-ketoacyl-CoA thiolase 2, peroxisomal (PED1), found in Arabidopsis thaliana (Mouse-ear cress).